The following is an 81-amino-acid chain: Small ribosomal subunit protein bS16 (81 aa).

It belongs to the bacterial ribosomal protein bS16 family.

This chain is Small ribosomal subunit protein bS16, found in Clostridium beijerinckii (strain ATCC 51743 / NCIMB 8052) (Clostridium acetobutylicum).